Here is a 145-residue protein sequence, read N- to C-terminus: Dihydrolipoyllysine-residue succinyltransferase component of 2-oxoglutarate dehydrogenase complex, mitochondrial (145 aa).

Residues 4–31 (ITVQTPAFAESVTEGDVRVEGGTPLFTL) form the Lipoyl-binding domain. S14 carries the post-translational modification Phosphoserine. Residues K36 and K66 each carry the N6-acetyllysine modification. Residues H119 and D123 contribute to the active site.

The protein belongs to the 2-oxoacid dehydrogenase family. As to quaternary structure, the 2-oxoglutarate dehydrogenase complex is composed of OGDH (2-oxoglutarate dehydrogenase; E1), DLST (dihydrolipoamide succinyltransferase; E2), DLD (dihydrolipoamide dehydrogenase; E3) and the assembly factor KGD4. It contains multiple copies of the three enzymatic components (E1, E2 and E3). In the nucleus, the 2-oxoglutarate dehydrogenase complex associates with KAT2A. Interacts with ABHD11; this interaction maintains the functional lipoylation of the 2-oxoglutarate dehydrogenase complex. It depends on (R)-lipoate as a cofactor.

The protein resides in the mitochondrion matrix. Its subcellular location is the nucleus. It catalyses the reaction N(6)-[(R)-dihydrolipoyl]-L-lysyl-[protein] + succinyl-CoA = N(6)-[(R)-S(8)-succinyldihydrolipoyl]-L-lysyl-[protein] + CoA. It participates in amino-acid degradation; L-lysine degradation via saccharopine pathway; glutaryl-CoA from L-lysine: step 6/6. It functions in the pathway carbohydrate metabolism; tricarboxylic acid cycle. In terms of biological role, dihydrolipoamide succinyltransferase (E2) component of the 2-oxoglutarate dehydrogenase complex. The 2-oxoglutarate dehydrogenase complex catalyzes the overall conversion of 2-oxoglutarate to succinyl-CoA and CO(2). The 2-oxoglutarate dehydrogenase complex is mainly active in the mitochondrion. A fraction of the 2-oxoglutarate dehydrogenase complex also localizes in the nucleus and is required for lysine succinylation of histones: associates with KAT2A on chromatin and provides succinyl-CoA to histone succinyltransferase KAT2A. The sequence is that of Dihydrolipoyllysine-residue succinyltransferase component of 2-oxoglutarate dehydrogenase complex, mitochondrial from Mesocricetus auratus (Golden hamster).